A 214-amino-acid chain; its full sequence is Cell division protein SepF (214 aa).

The tract at residues 23–70 (YYDDRAPSRGFPRPRFDDGYGRYDGDDYDDPRREPADYPPPAGYRGGY) is disordered. Residues 36–58 (PRFDDGYGRYDGDDYDDPRREPA) are compositionally biased toward basic and acidic residues.

It belongs to the SepF family. As to quaternary structure, homodimer. Interacts with FtsZ.

The protein localises to the cytoplasm. In terms of biological role, cell division protein that is part of the divisome complex and is recruited early to the Z-ring. Probably stimulates Z-ring formation, perhaps through the cross-linking of FtsZ protofilaments. Its function overlaps with FtsA. In Mycobacterium avium (strain 104), this protein is Cell division protein SepF.